The following is a 467-amino-acid chain: Glutamate--tRNA ligase (467 aa).

Positions 9–19 (PSPTGYLHIGG) match the 'HIGH' region motif. A 'KMSKS' region motif is present at residues 237–241 (KLSKR). Lysine 240 serves as a coordination point for ATP.

This sequence belongs to the class-I aminoacyl-tRNA synthetase family. Glutamate--tRNA ligase type 1 subfamily. Monomer.

Its subcellular location is the cytoplasm. It catalyses the reaction tRNA(Glu) + L-glutamate + ATP = L-glutamyl-tRNA(Glu) + AMP + diphosphate. Its function is as follows. Catalyzes the attachment of glutamate to tRNA(Glu) in a two-step reaction: glutamate is first activated by ATP to form Glu-AMP and then transferred to the acceptor end of tRNA(Glu). In Xanthomonas euvesicatoria pv. vesicatoria (strain 85-10) (Xanthomonas campestris pv. vesicatoria), this protein is Glutamate--tRNA ligase.